Reading from the N-terminus, the 657-residue chain is Single-minded homolog 2 (657 aa).

One can recognise a bHLH domain in the interval 1–53 (MKEKSKNAAKTRREKENGEFYELAKLLPLPSAITSQLDKASIIRLTTSYLKMR). 2 PAS domains span residues 77-147 (AKEL…PPLH) and 218-288 (PPSA…LVKG). A PAC domain is found at 218 to 288 (PPSAITEIKL…YAHHLLLVKG (71 aa)). A Single-minded C-terminal domain is found at 336–657 (EYKELQLSLD…GASVIITNGR (322 aa)). The segment covering 354–364 (ESWRTTLSTSQ) has biased composition (polar residues). Disordered stretches follow at residues 354–387 (ESWR…NPYP) and 612–641 (LGSA…APGA). Residues 367-386 (RKSAKPKNTKMKTKLRTNPY) carry the Nuclear localization signal motif. A compositionally biased stretch (basic residues) spans 369–381 (SAKPKNTKMKTKL).

In terms of assembly, efficient DNA binding requires dimerization with another bHLH protein. Heterodimer of SIM2 and ARNT. In terms of tissue distribution, transcripts were detected in high levels in kidney followed by skeletal muscle and lung. Low levels were found in testis, brain and heart. In early fetal development it is found in CNS, developing kidney, tongue epithelium and cartilage primordia.

It localises to the nucleus. In terms of biological role, transcription factor that may be a master gene of CNS development in cooperation with Arnt. It may have pleiotropic effects in the tissues expressed during development. This chain is Single-minded homolog 2 (Sim2), found in Mus musculus (Mouse).